The primary structure comprises 1281 residues: Protein ETHYLENE-INSENSITIVE 2 (1281 aa).

Over 1–21 (MDGQQLRSSESPASGGGGVTG) the chain is Cytoplasmic. The chain crosses the membrane as a helical span at residues 22–42 (GGAPHLFHALGPALLISIGYI). The Extracellular segment spans residues 43–61 (DLGKWVAAVEAGSRFGLDL). Residues 62–82 (VLLALLFNFMAILCQYLAACI) traverse the membrane as a helical segment. Topologically, residues 83 to 112 (GTVTGRSLAEICHQEYSRPTCIFLGVQAGL) are cytoplasmic. The chain crosses the membrane as a helical span at residues 113 to 133 (SLLTSELTMIFGIALGFNLLF). Over 134–137 (EYDD) the chain is Extracellular. The helical transmembrane segment at 138–158 (LITGICFATVVPNLLPYAISH) threads the bilayer. Topologically, residues 159–163 (LGKKM) are cytoplasmic. The helical transmembrane segment at 164-184 (VGTLNACIAGFALLCYVLGLL) threads the bilayer. Over 185 to 208 (VSQPQIPLTTNVIFPKLSGESAYS) the chain is Extracellular. A helical membrane pass occupies residues 209–229 (LMALLGANVMAHNFYIHSSVV). Residues 230–238 (QGQKRSAFA) lie on the Cytoplasmic side of the membrane. Residues 239 to 259 (VGALFHDHLFSVLFIFTGIFL) traverse the membrane as a helical segment. Residues 260-297 (VNHVLMNSAAADSTNTLLLTFQDVVELMNQIFVNPMAP) lie on the Extracellular side of the membrane. Residues 298–318 (TIFLVVLLFSSHIISLTSAIG) form a helical membrane-spanning segment. At 319–325 (SQVISQH) the chain is on the cytoplasmic side. A helical transmembrane segment spans residues 326 to 346 (LFGINLPLSGHHLILKAFAIV). The Extracellular portion of the chain corresponds to 347–362 (PALYCAKVAGAEGIYQ). A helical transmembrane segment spans residues 363–383 (LLIICQIIQAMLLPSSVVPLF). Residues 384–400 (RVASSRLIMGAHRVSLH) are Cytoplasmic-facing. A helical membrane pass occupies residues 401-421 (LEILTFLAFLLMLFSNIIFMA). Topologically, residues 422 to 447 (EMLFGDSGWLNTLKGNTGSPVVFPST) are extracellular. The helical transmembrane segment at 448 to 468 (VLITVACVSVAFSLYMAVTPL) threads the bilayer. The Cytoplasmic portion of the chain corresponds to 469-1281 (KSGSHEAELQ…KRRLSSKGQQ (813 aa)). Disordered regions lie at residues 540 to 565 (IESDHDSQHSTAHTSTAPESCHSPSF) and 593 to 665 (ESTV…NGSG). The segment covering 548-557 (HSTAHTSTAP) has biased composition (polar residues). A compositionally biased stretch (basic and acidic residues) spans 599-610 (VDSKSTGERDIE).

This sequence belongs to the NRAMP (TC 2.A.55) family. In terms of tissue distribution, expressed in roots, leaf sheaths, leaf blades, flowers, developing seeds, germinating seeds and young seedlings. Expressed in adventitious roots, vascular tissues of the seminal roots, lateral roots, the connecting region between vascular tissues and lateral roots, mature leaf, mature stem, tips of adventitious roots derived from the node, shoot apex, young panicle, anthers, pistil, stigma, ovary, seed coat and fruit coat pericarp.

The protein localises to the membrane. Central factor in ethylene signaling pathways that control development, senescence and grain size. Acts as a positive component of the ethylene-signaling pathway. This chain is Protein ETHYLENE-INSENSITIVE 2, found in Oryza sativa subsp. japonica (Rice).